The sequence spans 105 residues: Antimicrobial peptide 1 (105 aa).

The first 26 residues, 1 to 26 (METKRLAYVMFVLVCLFLAMAQPSQA), serve as a signal peptide directing secretion. Intrachain disulfides connect Cys-37–Cys-93, Cys-47–Cys-105, and Cys-49–Cys-77.

In terms of tissue distribution, detected at higher levels in needles and twigs from canker-resistant seedlings than in needles from canker-susceptible plants. During summer, detected on cankered, healthy and marginal bark. During winter, detected at lower levels in cankered bark and bark from the canker margin than in healthy bark (at protein level).

The protein resides in the secreted. Its subcellular location is the cell wall. Its function is as follows. Antimicrobial peptide. The chain is Antimicrobial peptide 1 from Pinus monticola (Western white pine).